The chain runs to 203 residues: Linker for activation of T-cells family member 2 (203 aa).

Topologically, residues 1-6 (MSAELE) are extracellular. A helical; Signal-anchor for type III membrane protein transmembrane segment spans residues 7-27 (LLWPVSGLLLLLLGATAWLCV). 2 S-palmitoyl cysteine lipidation sites follow: Cys-26 and Cys-29. Residues 28 to 203 (HCSRPGVKRN…NGDVAAAENI (176 aa)) lie on the Cytoplasmic side of the membrane. Phosphotyrosine is present on Tyr-59. 2 positions are modified to phosphoserine: Ser-60 and Ser-95. Tyr-139, Tyr-160, and Tyr-192 each carry phosphotyrosine. The segment at 171–203 (ESKRTMGAPMSLSGSPDEEPDYVNGDVAAAENI) is disordered.

When phosphorylated, interacts with GRB2. May also interact with SOS1, GAB1 and CBL. Post-translationally, phosphorylated on tyrosines following cross-linking of BCR in B-cells, high affinity IgG receptor (FCGR1) in myeloid cells, or high affinity IgE receptor (FCER1) in mast cells; which induces the recruitment of GRB2. As to expression, strongly expressed in testis. Expressed in heart, spleen and lung. Present in B-cells and mast cells (at protein level).

The protein resides in the cell membrane. In terms of biological role, involved in FCER1 (high affinity immunoglobulin epsilon receptor)-mediated signaling in mast cells. May also be involved in BCR (B-cell antigen receptor)-mediated signaling in B-cells and FCGR1 (high affinity immunoglobulin gamma Fc receptor I)-mediated signaling in myeloid cells. Couples activation of these receptors and their associated kinases with distal intracellular events through the recruitment of GRB2. This Mus musculus (Mouse) protein is Linker for activation of T-cells family member 2 (Lat2).